Reading from the N-terminus, the 478-residue chain is UDP-N-acetylmuramate--L-alanine ligase (478 aa).

G126–T132 is an ATP binding site.

This sequence belongs to the MurCDEF family.

It localises to the cytoplasm. The enzyme catalyses UDP-N-acetyl-alpha-D-muramate + L-alanine + ATP = UDP-N-acetyl-alpha-D-muramoyl-L-alanine + ADP + phosphate + H(+). It functions in the pathway cell wall biogenesis; peptidoglycan biosynthesis. Its function is as follows. Cell wall formation. This Synechococcus sp. (strain JA-2-3B'a(2-13)) (Cyanobacteria bacterium Yellowstone B-Prime) protein is UDP-N-acetylmuramate--L-alanine ligase.